Consider the following 117-residue polypeptide: DNA-directed RNA polymerase II subunit RPB11 (117 aa).

N-acetylmethionine is present on M1.

The protein belongs to the archaeal Rpo11/eukaryotic RPB11/RPC19 RNA polymerase subunit family. Component of the RNA polymerase II (Pol II) core complex consisting of 12 subunits: a ten-subunit catalytic core composed of POLR2A/RPB1, POLR2B/RPB2, POLR2C/RPB3, POLR2I/RPB9, POLR2J/RPB11, POLR2E/RPABC1, POLR2F/RPABC2, POLR2H/RPABC3, POLR2K/RPABC4 and POLR2L/RPABC5 and a mobile stalk composed of two subunits POLR2D/RPB4 and POLR2G/RPB7, protruding from the core and functioning primarily in transcription initiation. Part of Pol II(G) complex, in which Pol II core associates with an additional subunit POLR2M; unlike conventional Pol II, Pol II(G) functions as a transcriptional repressor. Part of TBP-based Pol II pre-initiation complex (PIC), in which Pol II core assembles with general transcription factors and other specific initiation factors including GTF2E1, GTF2E2, GTF2F1, GTF2F2, TCEA1, ERCC2, ERCC3, GTF2H2, GTF2H3, GTF2H4, GTF2H5, GTF2A1, GTF2A2, GTF2B and TBP; this large multi-subunit PIC complex mediates DNA unwinding and targets Pol II core to the transcription start site where the first phosphodiester bond forms. Interacts with PTPN6; this interaction promotes the recruitment of RNA pol II to the PCK1 promoter.

It is found in the nucleus. In terms of biological role, DNA-dependent RNA polymerase catalyzes the transcription of DNA into RNA using the four ribonucleoside triphosphates as substrates. Component of RNA polymerase II which synthesizes mRNA precursors and many functional non-coding RNAs. Pol II is the central component of the basal RNA polymerase II transcription machinery. It is composed of mobile elements that move relative to each other. POLR2J/RPB11 is part of the core element with the central large cleft. This is DNA-directed RNA polymerase II subunit RPB11 (POLR2J) from Bos taurus (Bovine).